The following is an 887-amino-acid chain: Alpha-amylase 3, chloroplastic (887 aa).

The transit peptide at 1 to 55 (MSTVPIESLLHHSYLRHNSKVNRGNRSFIPISLNLRSHFTSNKLLHSIGKSVGVS) directs the protein to the chloroplast. An intrachain disulfide couples cysteine 499 to cysteine 587. Residues 545–546 (YM) and 664–669 (RLDFVR) each bind substrate. Aspartate 666 acts as the Nucleophile in catalysis. The active-site Proton donor is the glutamate 691. Substrate-binding positions include tryptophan 693, serine 695, glutamine 712, lysine 754, 760–762 (GWW), histidine 773, glutamine 779, lysine 857, and tryptophan 884.

The protein belongs to the glycosyl hydrolase 13 family. The cofactor is Ca(2+). As to expression, expressed in developing siliques.

The protein localises to the plastid. The protein resides in the chloroplast. The catalysed reaction is Endohydrolysis of (1-&gt;4)-alpha-D-glucosidic linkages in polysaccharides containing three or more (1-&gt;4)-alpha-linked D-glucose units.. Redox-regulated, with the highest activity under reducing conditions. The midpoint redox potential is -329 mV. The disulfide bridge between Cys-499 and Cys-587 inhibits catalysis. Inhibited by CuCl(2) and H(2)O(2). Its function is as follows. Possesses endoamylolytic activity in vitro, but seems not required for breakdown of transitory starch in leaves. May be involved in the determination of the final structure of glucans by shortening long linear phospho-oligosaccharides in the chloroplast stroma. Can act on both soluble and insoluble glucan substrates to release small linear and branched malto-oligosaccharides. Works synergistically with beta-amylase toward efficient starch degradation. Has activity against p-nitrophenyl maltoheptaoside (BPNP-G7), amylopectin and beta-limit dextrin. Involved in stress-induced starch degradation. The polypeptide is Alpha-amylase 3, chloroplastic (Arabidopsis thaliana (Mouse-ear cress)).